The sequence spans 429 residues: 3-phosphoshikimate 1-carboxyvinyltransferase (429 aa).

Residues Lys22, Ser23, and Arg27 each coordinate 3-phosphoshikimate. Lys22 is a binding site for phosphoenolpyruvate. Phosphoenolpyruvate-binding residues include Gly94 and Arg122. Ser167, Gln169, Asp315, and Lys342 together coordinate 3-phosphoshikimate. Phosphoenolpyruvate is bound at residue Gln169. Asp315 serves as the catalytic Proton acceptor. Residues Arg346 and Arg388 each contribute to the phosphoenolpyruvate site.

Belongs to the EPSP synthase family. Monomer.

It is found in the cytoplasm. The enzyme catalyses 3-phosphoshikimate + phosphoenolpyruvate = 5-O-(1-carboxyvinyl)-3-phosphoshikimate + phosphate. The protein operates within metabolic intermediate biosynthesis; chorismate biosynthesis; chorismate from D-erythrose 4-phosphate and phosphoenolpyruvate: step 6/7. Functionally, catalyzes the transfer of the enolpyruvyl moiety of phosphoenolpyruvate (PEP) to the 5-hydroxyl of shikimate-3-phosphate (S3P) to produce enolpyruvyl shikimate-3-phosphate and inorganic phosphate. This is 3-phosphoshikimate 1-carboxyvinyltransferase from Geobacter sp. (strain M21).